A 131-amino-acid chain; its full sequence is MEFLSKIVRVHIPDYLNSVPVPDSFGGFLDLTAGQWLHLFAFSGTVAAAVYMSVKPYLDKKDQKDQLVNLRIQKESSKVVNMVDIEDLGNKVCYCRCWRSKKFPLCDGSHAKHNEDTGDNVGPLVLKRKDV.

Residues 1–35 (MEFLSKIVRVHIPDYLNSVPVPDSFGGFLDLTAGQ) are Lumenal-facing. Residues 36-58 (WLHLFAFSGTVAAAVYMSVKPYL) traverse the membrane as a helical segment. Residues 59-131 (DKKDQKDQLV…GPLVLKRKDV (73 aa)) lie on the Cytoplasmic side of the membrane. Positions 95, 97, 106, and 110 each coordinate [2Fe-2S] cluster.

The protein belongs to the CISD protein family. CISD2 subfamily. [2Fe-2S] cluster serves as cofactor.

Its subcellular location is the endoplasmic reticulum membrane. In Branchiostoma floridae (Florida lancelet), this protein is CDGSH iron-sulfur domain-containing protein 2 homolog A.